Consider the following 1076-residue polypeptide: Isoleucine--tRNA ligase (1076 aa).

Residues 47–57 (PYTTGQIHLGT) carry the 'HIGH' region motif. The 'KMSKS' region motif lies at 591–595 (KMSKS). Lys-594 is an ATP binding site.

It belongs to the class-I aminoacyl-tRNA synthetase family. IleS type 2 subfamily. Monomer. The cofactor is Zn(2+).

It localises to the cytoplasm. It carries out the reaction tRNA(Ile) + L-isoleucine + ATP = L-isoleucyl-tRNA(Ile) + AMP + diphosphate. Functionally, catalyzes the attachment of isoleucine to tRNA(Ile). As IleRS can inadvertently accommodate and process structurally similar amino acids such as valine, to avoid such errors it has two additional distinct tRNA(Ile)-dependent editing activities. One activity is designated as 'pretransfer' editing and involves the hydrolysis of activated Val-AMP. The other activity is designated 'posttransfer' editing and involves deacylation of mischarged Val-tRNA(Ile). The chain is Isoleucine--tRNA ligase from Methanoregula boonei (strain DSM 21154 / JCM 14090 / 6A8).